We begin with the raw amino-acid sequence, 269 residues long: Shikimate dehydrogenase (NADP(+)) (269 aa).

Shikimate is bound by residues 14–16 (SKS) and T61. Residue K65 is the Proton acceptor of the active site. NADP(+) is bound at residue E77. Residues N86 and D102 each contribute to the shikimate site. Residues 126–130 (GAGGA), 149–154 (NRTLSK), and M213 contribute to the NADP(+) site. Shikimate is bound at residue Y215. Residue G238 coordinates NADP(+).

This sequence belongs to the shikimate dehydrogenase family. As to quaternary structure, homodimer.

It catalyses the reaction shikimate + NADP(+) = 3-dehydroshikimate + NADPH + H(+). Its pathway is metabolic intermediate biosynthesis; chorismate biosynthesis; chorismate from D-erythrose 4-phosphate and phosphoenolpyruvate: step 4/7. Its function is as follows. Involved in the biosynthesis of the chorismate, which leads to the biosynthesis of aromatic amino acids. Catalyzes the reversible NADPH linked reduction of 3-dehydroshikimate (DHSA) to yield shikimate (SA). This is Shikimate dehydrogenase (NADP(+)) from Pasteurella multocida (strain Pm70).